The following is a 469-amino-acid chain: 3-isopropylmalate dehydratase large subunit (469 aa).

Residues Cys-347, Cys-408, and Cys-411 each coordinate [4Fe-4S] cluster.

It belongs to the aconitase/IPM isomerase family. LeuC type 1 subfamily. In terms of assembly, heterodimer of LeuC and LeuD. [4Fe-4S] cluster serves as cofactor.

It catalyses the reaction (2R,3S)-3-isopropylmalate = (2S)-2-isopropylmalate. It functions in the pathway amino-acid biosynthesis; L-leucine biosynthesis; L-leucine from 3-methyl-2-oxobutanoate: step 2/4. Catalyzes the isomerization between 2-isopropylmalate and 3-isopropylmalate, via the formation of 2-isopropylmaleate. This chain is 3-isopropylmalate dehydratase large subunit, found in Actinobacillus pleuropneumoniae serotype 3 (strain JL03).